Here is a 236-residue protein sequence, read N- to C-terminus: 2-C-methyl-D-erythritol 4-phosphate cytidylyltransferase (236 aa).

This sequence belongs to the IspD/TarI cytidylyltransferase family. IspD subfamily.

It carries out the reaction 2-C-methyl-D-erythritol 4-phosphate + CTP + H(+) = 4-CDP-2-C-methyl-D-erythritol + diphosphate. The protein operates within isoprenoid biosynthesis; isopentenyl diphosphate biosynthesis via DXP pathway; isopentenyl diphosphate from 1-deoxy-D-xylulose 5-phosphate: step 2/6. Catalyzes the formation of 4-diphosphocytidyl-2-C-methyl-D-erythritol from CTP and 2-C-methyl-D-erythritol 4-phosphate (MEP). The protein is 2-C-methyl-D-erythritol 4-phosphate cytidylyltransferase of Burkholderia vietnamiensis (strain G4 / LMG 22486) (Burkholderia cepacia (strain R1808)).